Reading from the N-terminus, the 142-residue chain is Large ribosomal subunit protein uL13 (142 aa).

Belongs to the universal ribosomal protein uL13 family. In terms of assembly, part of the 50S ribosomal subunit.

In terms of biological role, this protein is one of the early assembly proteins of the 50S ribosomal subunit, although it is not seen to bind rRNA by itself. It is important during the early stages of 50S assembly. This is Large ribosomal subunit protein uL13 from Psychrobacter cryohalolentis (strain ATCC BAA-1226 / DSM 17306 / VKM B-2378 / K5).